The chain runs to 251 residues: Malonyl-[acyl-carrier protein] O-methyltransferase (251 aa).

Belongs to the methyltransferase superfamily.

The catalysed reaction is malonyl-[ACP] + S-adenosyl-L-methionine = malonyl-[ACP] methyl ester + S-adenosyl-L-homocysteine. It participates in cofactor biosynthesis; biotin biosynthesis. In terms of biological role, converts the free carboxyl group of a malonyl-thioester to its methyl ester by transfer of a methyl group from S-adenosyl-L-methionine (SAM). It allows to synthesize pimeloyl-ACP via the fatty acid synthetic pathway. In Pseudescherichia vulneris (Escherichia vulneris), this protein is Malonyl-[acyl-carrier protein] O-methyltransferase.